A 208-amino-acid chain; its full sequence is MTNGPLRVGIGGPVGAGKTTLTEQLCRALAGRLSMAVVTNDIYTREDAEALMRAQVLPADRIRGVETGGCPHTAIREDASINLAAIADLTRAHPDLELILIESGGDNLAATFSPELADLTIYVIDTAAGQDIPRKRGPGVTRSDLLVVNKTDLAPHVGVDPVLLEADTQRARGPRPYVMAQLRHGVGIDEIVAFLIREGGLEQASAPA.

Gly-12–Thr-19 serves as a coordination point for GTP.

This sequence belongs to the SIMIBI class G3E GTPase family. UreG subfamily. In terms of assembly, homodimer. UreD, UreF and UreG form a complex that acts as a GTP-hydrolysis-dependent molecular chaperone, activating the urease apoprotein by helping to assemble the nickel containing metallocenter of UreC. The UreE protein probably delivers the nickel.

Its subcellular location is the cytoplasm. Its function is as follows. Facilitates the functional incorporation of the urease nickel metallocenter. This process requires GTP hydrolysis, probably effectuated by UreG. This is Urease accessory protein UreG from Rhodobacter capsulatus (Rhodopseudomonas capsulata).